A 488-amino-acid polypeptide reads, in one-letter code: Ribulose bisphosphate carboxylase large chain (488 aa).

Positions 127 and 177 each coordinate substrate. The active-site Proton acceptor is Lys-179. Lys-181 lines the substrate pocket. Mg(2+)-binding residues include Lys-205, Asp-207, and Glu-208. Residue Lys-205 is modified to N6-carboxylysine. His-297 serves as the catalytic Proton acceptor. Residues Arg-298, His-330, and Ser-382 each coordinate substrate.

The protein belongs to the RuBisCO large chain family. Type I subfamily. As to quaternary structure, heterohexadecamer of 8 large chains and 8 small chains. The cofactor is Mg(2+).

Its subcellular location is the plastid. It is found in the chloroplast. It carries out the reaction 2 (2R)-3-phosphoglycerate + 2 H(+) = D-ribulose 1,5-bisphosphate + CO2 + H2O. The enzyme catalyses D-ribulose 1,5-bisphosphate + O2 = 2-phosphoglycolate + (2R)-3-phosphoglycerate + 2 H(+). Its function is as follows. RuBisCO catalyzes two reactions: the carboxylation of D-ribulose 1,5-bisphosphate, the primary event in carbon dioxide fixation, as well as the oxidative fragmentation of the pentose substrate in the photorespiration process. Both reactions occur simultaneously and in competition at the same active site. The protein is Ribulose bisphosphate carboxylase large chain of Pyropia yezoensis (Susabi-nori).